Here is a 450-residue protein sequence, read N- to C-terminus: Protein tailless (450 aa).

Positions 31–108 (HVPCKVCRDH…VGMNKDAVQH (78 aa)) form a DNA-binding region, nuclear receptor. NR C4-type zinc fingers lie at residues 34-54 (CKVC…CDGC) and 70-96 (CKSQ…LRKC). The 262-residue stretch at 187–448 (VPRVPHHPVH…RLISDMYSQR (262 aa)) folds into the NR LBD domain.

This sequence belongs to the nuclear hormone receptor family. NR2 subfamily. Monomer.

The protein localises to the nucleus. In terms of biological role, orphan receptor that binds DNA as a monomer to hormone response elements (HRE) containing an extended core motif half-site sequence 5'-AAGTCA-3' in which the 5' flanking nucleotides participate in determining receptor specificity. This receptor binds to the consensus sequence [AG][AG]AAGTCAA. Plays a key role in the establishment of non-metameric domains at the anterior and posterior poles of the embryo. It may also play a role in the nervous system. The maternal terminal pathway activates the tll gene in the termini; TLL activity then represses segmentation and activates terminal-specific genes in these domains. Involved in the regulation of early eye development. In the embryonic visual system anlage drives cells to optic lobe as opposed to Bolwig's organ fate. The chain is Protein tailless (tll) from Drosophila virilis (Fruit fly).